The sequence spans 184 residues: Cell division protein ZapC (184 aa).

It belongs to the ZapC family. In terms of assembly, interacts directly with FtsZ.

It is found in the cytoplasm. Its function is as follows. Contributes to the efficiency of the cell division process by stabilizing the polymeric form of the cell division protein FtsZ. Acts by promoting interactions between FtsZ protofilaments and suppressing the GTPase activity of FtsZ. The chain is Cell division protein ZapC from Idiomarina loihiensis (strain ATCC BAA-735 / DSM 15497 / L2-TR).